The primary structure comprises 273 residues: Putative phosphoenolpyruvate synthase regulatory protein (273 aa).

Residue alanine 153–threonine 160 coordinates ADP.

This sequence belongs to the pyruvate, phosphate/water dikinase regulatory protein family. PSRP subfamily.

It carries out the reaction [pyruvate, water dikinase] + ADP = [pyruvate, water dikinase]-phosphate + AMP + H(+). It catalyses the reaction [pyruvate, water dikinase]-phosphate + phosphate + H(+) = [pyruvate, water dikinase] + diphosphate. In terms of biological role, bifunctional serine/threonine kinase and phosphorylase involved in the regulation of the phosphoenolpyruvate synthase (PEPS) by catalyzing its phosphorylation/dephosphorylation. In Xanthomonas axonopodis pv. citri (strain 306), this protein is Putative phosphoenolpyruvate synthase regulatory protein.